An 838-amino-acid polypeptide reads, in one-letter code: MEGGAKSNDVSAAPIAQPLSEDPTDIASNIKYHAQYTPHFSPFKFEPLQAYYAATADSVRDRLIKQWNDTYLHYDKVNPKQTYYLSMEYLQGRALTNAVGNLDIHNAYADALNKLGQQLEEVVEQEKDAALGNGGLGRLASCFLDSMATLNLPAWGYGLRYRYGLFKQLITKAGQEEVPEDWLEKFSPWEIVRHDVVFPIRFFGHVEVLPSGSRKWVGGEVLQALAYDVPIPGYRTKNTNSLRLWEAKASSEDFNLFLFNDGQYDAAAQLHSRAQQICAVLYPGDATENGKLLRLKQQFFLCSASLQDIIARFKEREDGKGSHQWSEFPKKVAIQLNDTHPTLTIPELMRLLMDDEGLGWDESWNITTRTIAYTNHTVLPEALEKWSQAVMWKLLPRHMEIIEEIDKRFVATIMSERPDLENKMPSMRILDHNATKPVVHMANLCVVSSHTVNGVAQLHSDILKAELFADYVSVWPTKFQNKTNGITPRRWIRFCSPELSHIITKWLKTDQWVTNLELLANLREFADNSELHAEWESAKMANKQRLAQYILHVTGVSIDPNSLFDIQVKRIHEYKRQLLNILGVIYRYKKLKGMSPEERKNTTPRTVMIGGKAFATYTNAKRIVKLVTDVGDVVNSDPDVNDYLKVVFVPNYNVSVAEMLIPGSELSQHISTAGMEASGTSNMKFALNGCLIIGTLDGANVEIREEIGEDNFFLFGATADEVPQLRKDRENGLFKPDPRFEEAKQFIRSGAFGTYDYNPLLESLEGNSGYGRGDYFLVGHDFPSYMDAQARVDEAYKDRKRWIKMSILSTSGSGKFSSDRTISQYAKEIWNIAECRVP.

A disordered region spans residues 1–21 (MEGGAKSNDVSAAPIAQPLSE). K684 is subject to N6-(pyridoxal phosphate)lysine.

Belongs to the glycogen phosphorylase family. Pyridoxal 5'-phosphate is required as a cofactor.

It is found in the cytoplasm. It catalyses the reaction [(1-&gt;4)-alpha-D-glucosyl](n) + phosphate = [(1-&gt;4)-alpha-D-glucosyl](n-1) + alpha-D-glucose 1-phosphate. Phosphorylase is an important allosteric enzyme in carbohydrate metabolism. Enzymes from different sources differ in their regulatory mechanisms and in their natural substrates. However, all known phosphorylases share catalytic and structural properties. In Solanum tuberosum (Potato), this protein is Alpha-glucan phosphorylase, H isozyme.